The chain runs to 1230 residues: Serine/threonine-protein kinase PDK1 (1230 aa).

Residues 1 to 277 are disordered; the sequence is MASSHFGPAS…ASSGALKKHS (277 aa). Low complexity predominate over residues 34 to 50; that stretch reads SSSSSSRSTTTCSSTSS. Residues 62–76 are compositionally biased toward polar residues; the sequence is ETSTAATSRSQLPSN. Positions 77-87 are enriched in basic and acidic residues; the sequence is RHSENEAEHDT. 2 stretches are compositionally biased toward polar residues: residues 107 to 117 and 140 to 175; these read PRSNRLGTSPQ and SKRQSNTETVSGTSPSTPLGKSFLAQQDLSPNSSTI. Residues 185-202 are compositionally biased toward basic and acidic residues; it reads PNDRLSHDRESHSAERPR. Positions 217 to 226 are enriched in polar residues; it reads STPSSPTNSY. Residues 252-262 are compositionally biased toward basic and acidic residues; sequence ARDGDDRERRQ. A Protein kinase domain is found at 281 to 801; it reads WVLGEELGVG…ITFIKTHPFF (521 aa). ATP contacts are provided by residues 291 to 293 and K319; that span reads SYS. 2 disordered regions span residues 345–522 and 534–597; these read LSDP…RSGA and TLPP…KMSA. Polar residues-rich tracts occupy residues 378–397 and 408–433; these read TASIGGQSSMASVSGGTVSN and IVTTSSAASSPVLTASSGSTQLSPTA. Basic and acidic residues-rich tracts occupy residues 466 to 494 and 502 to 521; these read GGEDGKDGQDGQETPSREWDRDRDWDNMT and VREESAEGGEKEKDEEERSG. The segment covering 535-544 has biased composition (pro residues); the sequence is LPPPQIPSTP. Basic and acidic residues predominate over residues 555-569; the sequence is DGHRTSRETPRDRPH. ATP contacts are provided by residues 621 to 623 and E627; that span reads SLA. The active-site Proton acceptor is the D666. ATP is bound by residues E670 and D684. The span at 850–859 shows a compositional bias: acidic residues; it reads EDEDGFEYDA. Disordered stretches follow at residues 850–871, 907–955, 972–1035, and 1116–1152; these read EDEDGFEYDADTVSPRPEGGAV, LGED…GGNR, GGGM…SDEA, and EADGDPAGSDSGAGLSSSSHVESGGGGVGGGGRGGGH. The segment covering 927–942 has biased composition (basic and acidic residues); it reads GKREKEVEKKKGEKAR. Composition is skewed to low complexity over residues 977–992, 1002–1030, and 1120–1137; these read GSATSVAASDTVRTPG, RPGSRAGIPSFGLGPGSGSRSNRGSGASM, and DPAGSDSGAGLSSSSHVE. The span at 1138–1152 shows a compositional bias: gly residues; that stretch reads SGGGGVGGGGRGGGH.

Belongs to the protein kinase superfamily. AGC Ser/Thr protein kinase family. PDPK1 subfamily.

The catalysed reaction is L-seryl-[protein] + ATP = O-phospho-L-seryl-[protein] + ADP + H(+). The enzyme catalyses L-threonyl-[protein] + ATP = O-phospho-L-threonyl-[protein] + ADP + H(+). Its function is as follows. Serine/threonine-protein kinase that functions in the sphingolipid-mediated signaling pathway, regulating organization of the plasma membrane. May phosphorylate PKC1 to activate the cell integrity MAPK cascade during cell wall and membrane stress. May regulate sphingolipid metabolism upstream of YPK1. The polypeptide is Serine/threonine-protein kinase PDK1 (Cryptococcus neoformans var. grubii serotype A (strain H99 / ATCC 208821 / CBS 10515 / FGSC 9487) (Filobasidiella neoformans var. grubii)).